We begin with the raw amino-acid sequence, 806 residues long: Glycerol-3-phosphate acyltransferase (806 aa).

An HXXXXD motif motif is present at residues 305-310 (CHRSHM).

This sequence belongs to the GPAT/DAPAT family.

It localises to the cell inner membrane. It catalyses the reaction sn-glycerol 3-phosphate + an acyl-CoA = a 1-acyl-sn-glycero-3-phosphate + CoA. The protein operates within phospholipid metabolism; CDP-diacylglycerol biosynthesis; CDP-diacylglycerol from sn-glycerol 3-phosphate: step 1/3. This is Glycerol-3-phosphate acyltransferase from Salmonella agona (strain SL483).